We begin with the raw amino-acid sequence, 247 residues long: Fibroblast growth factor 14 (247 aa).

2 disordered regions span residues 1–38 (MAAA…KNRG) and 216–247 (ETVP…CKTT). Basic and acidic residues predominate over residues 15-25 (QAREQHWDRPS).

It belongs to the heparin-binding growth factors family. As to quaternary structure, interacts with SCN8A.

Its subcellular location is the nucleus. Functionally, probably involved in nervous system development and function. This is Fibroblast growth factor 14 (Fgf14) from Rattus norvegicus (Rat).